Reading from the N-terminus, the 159-residue chain is UPF0336 protein MAP_4107 (159 aa).

The protein belongs to the UPF0336 family.

The polypeptide is UPF0336 protein MAP_4107 (Mycolicibacterium paratuberculosis (strain ATCC BAA-968 / K-10) (Mycobacterium paratuberculosis)).